The sequence spans 447 residues: Dimethylsulfoniopropionate lyase DddP (447 aa).

Residues 1-26 are disordered; the sequence is MNRHFNATRKIDPSRGATLGDGSPND. A divalent metal cation-binding residues include Asp295, Asp297, Asp307, His371, Glu406, and Glu421.

Belongs to the peptidase M24B family. Homodimer. Requires a divalent metal cation as cofactor.

The enzyme catalyses S,S-dimethyl-beta-propiothetin = acrylate + dimethyl sulfide + H(+). Its function is as follows. Able to cleave dimethylsulfoniopropionate (DMSP), releasing dimethyl sulfide (DMS). DMS is the principal form by which sulfur is transported from oceans to the atmosphere. The real activity of the protein is however subject to debate and it is unclear whether it constitutes a real dimethylsulfoniopropionate lyase in vivo: the low activity with DMSP as substrate suggests that DMSP is not its native substrate. The sequence is that of Dimethylsulfoniopropionate lyase DddP from Roseobacter denitrificans (strain ATCC 33942 / OCh 114) (Erythrobacter sp. (strain OCh 114)).